A 943-amino-acid chain; its full sequence is Isoleucine--tRNA ligase (943 aa).

The 'HIGH' region motif lies at 58-68 (PYANGKIHIGH). Glutamate 567 contacts L-isoleucyl-5'-AMP. Residues 608–612 (KMSKS) carry the 'KMSKS' region motif. Lysine 611 provides a ligand contact to ATP. Positions 906, 909, 926, and 929 each coordinate Zn(2+).

The protein belongs to the class-I aminoacyl-tRNA synthetase family. IleS type 1 subfamily. As to quaternary structure, monomer. Zn(2+) is required as a cofactor.

It localises to the cytoplasm. The catalysed reaction is tRNA(Ile) + L-isoleucine + ATP = L-isoleucyl-tRNA(Ile) + AMP + diphosphate. In terms of biological role, catalyzes the attachment of isoleucine to tRNA(Ile). As IleRS can inadvertently accommodate and process structurally similar amino acids such as valine, to avoid such errors it has two additional distinct tRNA(Ile)-dependent editing activities. One activity is designated as 'pretransfer' editing and involves the hydrolysis of activated Val-AMP. The other activity is designated 'posttransfer' editing and involves deacylation of mischarged Val-tRNA(Ile). This Pseudomonas putida (strain ATCC 47054 / DSM 6125 / CFBP 8728 / NCIMB 11950 / KT2440) protein is Isoleucine--tRNA ligase.